Here is a 471-residue protein sequence, read N- to C-terminus: Glutamate--tRNA ligase (471 aa).

The short motif at 9-19 (PSPTGYLHVGG) is the 'HIGH' region element. The Zn(2+) site is built by cysteine 98, cysteine 100, cysteine 125, and histidine 127. The 'KMSKS' region signature appears at 237-241 (KLSKR). Lysine 240 contacts ATP.

This sequence belongs to the class-I aminoacyl-tRNA synthetase family. Glutamate--tRNA ligase type 1 subfamily. Monomer. Zn(2+) is required as a cofactor.

It localises to the cytoplasm. It carries out the reaction tRNA(Glu) + L-glutamate + ATP = L-glutamyl-tRNA(Glu) + AMP + diphosphate. Its function is as follows. Catalyzes the attachment of glutamate to tRNA(Glu) in a two-step reaction: glutamate is first activated by ATP to form Glu-AMP and then transferred to the acceptor end of tRNA(Glu). The polypeptide is Glutamate--tRNA ligase (Salmonella schwarzengrund (strain CVM19633)).